We begin with the raw amino-acid sequence, 158 residues long: Protein Smg homolog (158 aa).

The protein belongs to the Smg family.

The protein is Protein Smg homolog of Alteromonas mediterranea (strain DSM 17117 / CIP 110805 / LMG 28347 / Deep ecotype).